We begin with the raw amino-acid sequence, 347 residues long: Metacaspase-2 (347 aa).

The propeptide occupies 1 to 55 (MCSLITQLCDAGQLADYVGLGWLNAVSSQPYLVQALGLQPPPRRVDVDAAFRDAK). Residues 1–70 (MCSLITQLCD…QPWVATPLPG (70 aa)) form a regulates substrate access to the active site region. Residue H158 is part of the active site. Residues D173, D189, and D190 each contribute to the Ca(2+) site. The active site involves C213. D220 contributes to the Ca(2+) binding site.

It belongs to the peptidase C14B family. In terms of assembly, monomer. In terms of processing, auto-proteolytic cleavage of the propeptide after Lys-55 and between the large and small subunits after Lys-268 is required for catalytic activity towards large protein substrates but is dispensable towards small oligopeptide substrates. After processing, the propeptide and the large and small subunits remain associated by non-covalent bonds. In vivo, the unprocessed enzyme appears to be the predominant form.

The protein resides in the recycling endosome. Activated by Ca(2+). In response to calcium binding, the 280-loop, a disordered loop consisting of residues 269-275, undergoes a conformational change which stabilizes substrates in the active site. The binding to the substrate triggers the release of the N-terminal region resulting in the activation of the enzyme. Proteolytic cleavage is required for catalytic activity towards large protein substrates. Its function is as follows. Cysteine protease that cleaves specifically after arginine or lysine residues. This is Metacaspase-2 from Trypanosoma brucei brucei (strain 927/4 GUTat10.1).